The sequence spans 601 residues: Peptide transporter PTR2 (601 aa).

The segment covering 1–10 (MLNHPSQGSD) has biased composition (polar residues). The segment at 1–66 (MLNHPSQGSD…DEDFEGPTEE (66 aa)) is disordered. Topologically, residues 1-150 (MLNHPSQGSD…PVFGGYVADT (150 aa)) are extracellular. A compositionally biased stretch (basic and acidic residues) spans 14–28 (DEKQGDFPVIEEEKT). Position 37 is a phosphotyrosine (Y37). Residues S39 and S45 each carry the phosphoserine modification. A compositionally biased stretch (polar residues) spans 42–53 (VANSTERYNLSP). Residues 55 to 66 (PEDEDFEGPTEE) show a composition bias toward acidic residues. A helical transmembrane segment spans residues 151–172 (FWGKYNTICCGTAIYIAGIFIL). Topologically, residues 173 to 182 (FITSIPSVGN) are cytoplasmic. The helical transmembrane segment at 183 to 202 (RDSAIGGFIAAIILIGIATG) threads the bilayer. The Extracellular segment spans residues 203–210 (MIKANLSV). Residues 211–229 (LIADQLPKRKPSIKVLKSG) form a helical membrane-spanning segment. The Cytoplasmic segment spans residues 230 to 267 (ERVIVDSNITLQNVFMFFYFMINVGSLSLMATTELEYH). A helical membrane pass occupies residues 268 to 287 (KGFWAAYLLPFCFFWIAVVT). The Extracellular portion of the chain corresponds to 288–294 (LIFGKKQ). Residues 295–316 (YIQRPIGDKVIAKSFKVCWILT) form a helical membrane-spanning segment. Topologically, residues 317–378 (KNKFDFNAAK…ISSFITQASM (62 aa)) are cytoplasmic. Residues 379 to 399 (MELHGIPNDFLQAFDSIALII) form a helical membrane-spanning segment. Over 400–412 (FIPIFEKFVYPFI) the chain is Extracellular. Residues 413–429 (RRYTPLKPITKIFFGFM) form a helical membrane-spanning segment. Residues 430-448 (FGSFAMTWAAVLQSFVYKA) lie on the Cytoplasmic side of the membrane. The chain crosses the membrane as a helical span at residues 449 to 466 (GPWYNEPLGHNTPNHVHV). Residues 467–494 (CWQIPAYVLISFSEIFASITGLEYAYSK) lie on the Extracellular side of the membrane. A helical membrane pass occupies residues 495–513 (APASMKSFIMSIFLLTNAF). The Cytoplasmic portion of the chain corresponds to 514–526 (GSAIGCALSPVTV). A helical transmembrane segment spans residues 527–547 (DPKFTWLFTGLAVACFISGCL). The Extracellular portion of the chain corresponds to 548 to 554 (FWLCFRK). A helical transmembrane segment spans residues 555-577 (YNDTEEEMNAMDYEEEDEFDLNP). Over 578-601 (ISAPKANDIEILEPMESLRSTTKY) the chain is Cytoplasmic. S594 is subject to Phosphoserine.

It belongs to the major facilitator superfamily. Proton-dependent oligopeptide transporter (POT/PTR) (TC 2.A.17) family.

Its subcellular location is the membrane. Functionally, uptake of small peptides. This Saccharomyces cerevisiae (strain ATCC 204508 / S288c) (Baker's yeast) protein is Peptide transporter PTR2 (PTR2).